Reading from the N-terminus, the 179-residue chain is UPF0316 protein BH0621 (179 aa).

A run of 3 helical transmembrane segments spans residues 9 to 29 (ALTM…LFTV), 41 to 61 (LAAT…SLVL), and 67 to 87 (IENL…GMKV).

This sequence belongs to the UPF0316 family.

The protein localises to the cell membrane. This chain is UPF0316 protein BH0621, found in Halalkalibacterium halodurans (strain ATCC BAA-125 / DSM 18197 / FERM 7344 / JCM 9153 / C-125) (Bacillus halodurans).